The sequence spans 563 residues: Membrane protein insertase YidC (563 aa).

The chain crosses the membrane as a helical span at residues 6–26; sequence TVLWMIFSFSLLLLWNNWQIH. The segment at 36 to 70 is disordered; sequence PAPEAAATQQPKADANGTAASSTASIPSSPAAAPA. The span at 54–70 shows a compositional bias: low complexity; it reads AASSTASIPSSPAAAPA. A run of 4 helical transmembrane segments spans residues 373-393, 443-463, 482-502, and 512-532; these read WGWT…PLAA, LPMV…LASV, PFFI…KLNP, and VMMI…AGLV.

The protein belongs to the OXA1/ALB3/YidC family. Type 1 subfamily. Interacts with the Sec translocase complex via SecD. Specifically interacts with transmembrane segments of nascent integral membrane proteins during membrane integration.

The protein resides in the cell membrane. Required for the insertion and/or proper folding and/or complex formation of integral membrane proteins into the membrane. Involved in integration of membrane proteins that insert both dependently and independently of the Sec translocase complex, as well as at least some lipoproteins. Aids folding of multispanning membrane proteins. The sequence is that of Membrane protein insertase YidC from Bordetella bronchiseptica (strain ATCC BAA-588 / NCTC 13252 / RB50) (Alcaligenes bronchisepticus).